The chain runs to 1199 residues: DNA polymerase beta (1199 aa).

This sequence belongs to the DNA polymerase type-B family.

It carries out the reaction DNA(n) + a 2'-deoxyribonucleoside 5'-triphosphate = DNA(n+1) + diphosphate. DNA-directed DNA polymerase involved in viral DNA replication. This Ornithodoros (relapsing fever ticks) protein is DNA polymerase beta.